A 362-amino-acid polypeptide reads, in one-letter code: MNAPTRTPPPSNGGHGSTGSTGSTGDAAPGGGTGRGPAATARGHAALAKTQVLIEALPWLSRFQGATIVVKYGGNAMTEPALREAFAADVVFLRHSGLRVVVVHGGGPQITAHLERLGVPSTFVGGLRVTTPQTMDVVRMVLLGQVNRDVVGLVNDHGPFAVGLSGEDANLFTARRRPAIVDGREVDVGLVGDIVEVRPETINALLGSGKVPVVASVARGVDGGVYNVNADTAAAELAVALGATKLVVLTDVEGLYADWPASDEVISELSITELEQLLPSLTAGMIPKMEACRRAVRGGVPQAHVLDGRVPHAVLLEIFTDDGIGTLIMAESGTSPEPGTPPAPAARPAGIVPAGEPTGGTP.

The span at 1-11 shows a compositional bias: pro residues; that stretch reads MNAPTRTPPPS. A disordered region spans residues 1–42; sequence MNAPTRTPPPSNGGHGSTGSTGSTGDAAPGGGTGRGPAATAR. Residues 106–107, R128, and N227 contribute to the substrate site; that span reads GG. The disordered stretch occupies residues 329–362; that stretch reads MAESGTSPEPGTPPAPAARPAGIVPAGEPTGGTP. The segment covering 346–355 has biased composition (low complexity); that stretch reads ARPAGIVPAG.

It belongs to the acetylglutamate kinase family. ArgB subfamily.

It localises to the cytoplasm. It catalyses the reaction N-acetyl-L-glutamate + ATP = N-acetyl-L-glutamyl 5-phosphate + ADP. The protein operates within amino-acid biosynthesis; L-arginine biosynthesis; N(2)-acetyl-L-ornithine from L-glutamate: step 2/4. Catalyzes the ATP-dependent phosphorylation of N-acetyl-L-glutamate. In Frankia casuarinae (strain DSM 45818 / CECT 9043 / HFP020203 / CcI3), this protein is Acetylglutamate kinase.